We begin with the raw amino-acid sequence, 655 residues long: Tetratricopeptide repeat protein 30 homolog (655 aa).

7 TPR repeats span residues 10–43 (EGHVTRTIYNLIKDKRYEDVIECITSFGEAANTR), 44–76 (AGLSTLGHCYYHAQKYEEAATCYEQLCQLAPKE), 143–176 (ADTLNDEGCLLFQADQHEAAVQRFQAALQVGGFN), 178–210 (LVAYNVALAHFQKKQRAQALDYTSEIVERGMRN), 385–418 (LAAKVQEVRATNEQQALRDALKDYEQALELYLPV), 450–484 (SIWRLNAGHVLFMQGDKYNEAAAFYEPIVRQHSDD), and 534–567 (CIVNLVVGTLYCAKSNYEFGLSRIAHALESGSGN).

Belongs to the TTC30/dfy-1/fleer family.

The protein localises to the cell projection. It is found in the cilium. Required for polyglutamylation of axonemal tubulin in sensory cilia. Plays a role in anterograde intraflagellar transport (IFT), the process by which cilia precursors are transported from the base of the cilium to the site of their incorporation at the tip. This Drosophila melanogaster (Fruit fly) protein is Tetratricopeptide repeat protein 30 homolog.